A 96-amino-acid chain; its full sequence is Large ribosomal subunit protein bL27 (96 aa).

The segment at 13 to 33 is disordered; sequence KGGGSTANGRNSAGRRLGAKA.

It belongs to the bacterial ribosomal protein bL27 family.

In Lactobacillus acidophilus (strain ATCC 700396 / NCK56 / N2 / NCFM), this protein is Large ribosomal subunit protein bL27.